The primary structure comprises 221 residues: Protein-L-isoaspartate O-methyltransferase (221 aa).

The active site involves Ser-57.

It belongs to the methyltransferase superfamily. L-isoaspartyl/D-aspartyl protein methyltransferase family.

It is found in the cytoplasm. It catalyses the reaction [protein]-L-isoaspartate + S-adenosyl-L-methionine = [protein]-L-isoaspartate alpha-methyl ester + S-adenosyl-L-homocysteine. Its function is as follows. Catalyzes the methyl esterification of L-isoaspartyl residues in peptides and proteins that result from spontaneous decomposition of normal L-aspartyl and L-asparaginyl residues. It plays a role in the repair and/or degradation of damaged proteins. The polypeptide is Protein-L-isoaspartate O-methyltransferase (Korarchaeum cryptofilum (strain OPF8)).